The following is a 121-amino-acid chain: MSLFDLKRAERRRRRVRLKLRSLSSIRLSVFKSNRHFYAQLIDDEAGRTVAAASTLESEVLAVASRRVNAGAVKIVAKLLAERISGLDAAYRKFVFDRGSYRYMGVVAAFADELRSLGFEF.

It belongs to the universal ribosomal protein uL18 family. Part of the 50S ribosomal subunit; part of the 5S rRNA/L5/L18/L25 subcomplex. Contacts the 5S and 23S rRNAs.

Functionally, this is one of the proteins that bind and probably mediate the attachment of the 5S RNA into the large ribosomal subunit, where it forms part of the central protuberance. This is Large ribosomal subunit protein uL18 from Anaplasma phagocytophilum (strain HZ).